We begin with the raw amino-acid sequence, 451 residues long: Probable DNA polymerase delta small subunit (451 aa).

This sequence belongs to the DNA polymerase delta/II small subunit family. Heterodimer with subunits of 125 kDa and 50 kDa.

The protein localises to the nucleus. It catalyses the reaction DNA(n) + a 2'-deoxyribonucleoside 5'-triphosphate = DNA(n+1) + diphosphate. In terms of biological role, the function of the small subunit is not yet clear. This is Probable DNA polymerase delta small subunit from Caenorhabditis elegans.